A 798-amino-acid polypeptide reads, in one-letter code: Probable DEAD-box ATP-dependent RNA helicase 48 (798 aa).

Disordered stretches follow at residues 76–100 (KMWG…MSPK), 117–148 (DFWN…NSPI), and 236–257 (FRKN…GKMI). Residues 132–148 (GSRSGSDSIDSTSNSPI) show a composition bias toward low complexity. The segment covering 242 to 252 (STEEDSDEEGD) has biased composition (acidic residues). Residues 328–356 (KRFDESCISPLTLKALSASGILKMTRVQD) carry the Q motif motif. The Helicase ATP-binding domain occupies 359 to 543 (LSECLDGKDA…QLVLKRDHSY (185 aa)). An ATP-binding site is contributed by 372-379 (AKTGTGKS). Positions 491–494 (DEAD) match the DEAD box motif. A Helicase C-terminal domain is found at 577–726 (LLKEHINNTP…SIVKHQVDQS (150 aa)).

The protein belongs to the DEAD box helicase family.

It catalyses the reaction ATP + H2O = ADP + phosphate + H(+). The sequence is that of Probable DEAD-box ATP-dependent RNA helicase 48 (RH48) from Arabidopsis thaliana (Mouse-ear cress).